A 362-amino-acid chain; its full sequence is N-acylethanolamine-hydrolyzing acid amidase (362 aa).

Positions 1-33 (MGTPAIRAACHGAHLALALLLLLSLSDPWLWAT) are cleaved as a signal peptide. N-linked (GlcNAc...) asparagine glycans are attached at residues Asn-42 and Asn-112. The active-site Nucleophile is Cys-131. N-linked (GlcNAc...) asparagine glycans are attached at residues Asn-314 and Asn-338.

The protein belongs to the acid ceramidase family. In terms of assembly, heterodimer of an alpha and a beta subunit, produced by autocatalytic cleavage. Post-translationally, N-glycosylated. Tunicamycin treatment causes a reduction in specific activity against N-palmitoylethanolamine. In terms of processing, autoproteolytic cleavage at pH 4.5 gives rise to the alpha and beta subunit. Cleavage gives rise to a conformation change that activates the enzyme. The same catalytic Cys residue mediates the autoproteolytic cleavage and subsequent hydrolysis of lipid substrates. As to expression, expressed in brain, cecum, colon, heart, ileum, kidney, liver, lung, spleen, stomach, submaxillary gland, testis and thymus.

The protein localises to the lysosome. It localises to the membrane. The catalysed reaction is N-hexadecanoylethanolamine + H2O = ethanolamine + hexadecanoate. It catalyses the reaction an N-(long-chain fatty acyl)ethanolamine + H2O = a long-chain fatty acid + ethanolamine. The enzyme catalyses N-dodecanoylethanolamine + H2O = dodecanoate + ethanolamine. It carries out the reaction N-tetradecanoylethanolamine + H2O = tetradecanoate + ethanolamine. The catalysed reaction is an N-acylsphing-4-enine + H2O = sphing-4-enine + a fatty acid. It catalyses the reaction N-hexadecanoylsphing-4-enine + H2O = sphing-4-enine + hexadecanoate. The enzyme catalyses N-dodecanoylsphing-4-enine + H2O = dodecanoate + sphing-4-enine. It participates in lipid metabolism; fatty acid metabolism. With respect to regulation, stimulated by DTT. Stimulated by nonionic detergent of the polyoxyethylenep-t-octylphenylether type (Triton X-100 or Nonidet P-40) whereas 3-[(3-cholamidopropyl)dimethylammonio]propane-1-sulfonate (CHAPS) and octyl alpha-D-glucopyranoside decrease the N-(long-chain-acyl)ethanolamine deacylase activity. Polysorbate 20 (Tween 20) is inhibitory. Stimulated by endogenous phospholipids such as choline- or ethanolamine-containing phospholipids, and dihydrolipoic acid. Its function is as follows. Degrades bioactive fatty acid amides to their corresponding acids, with the following preference: N-palmitoylethanolamine &gt; N-myristoylethanolamine &gt; N-stearoylethanolamine &gt; N-oleoylethanolamine &gt; N-linoleoylethanolamine &gt; N-arachidonoylethanolamine. The chain is N-acylethanolamine-hydrolyzing acid amidase from Rattus norvegicus (Rat).